The following is a 214-amino-acid chain: Large ribosomal subunit protein uL3 (214 aa).

A disordered region spans residues 133–154 (GLGAGHGTQRKHRSPGSIGGCA).

Belongs to the universal ribosomal protein uL3 family. In terms of assembly, part of the 50S ribosomal subunit. Forms a cluster with proteins L14 and L19.

Its function is as follows. One of the primary rRNA binding proteins, it binds directly near the 3'-end of the 23S rRNA, where it nucleates assembly of the 50S subunit. The polypeptide is Large ribosomal subunit protein uL3 (Streptomyces avermitilis (strain ATCC 31267 / DSM 46492 / JCM 5070 / NBRC 14893 / NCIMB 12804 / NRRL 8165 / MA-4680)).